The primary structure comprises 395 residues: S-adenosylmethionine synthase (395 aa).

His15 serves as a coordination point for ATP. Asp17 is a binding site for Mg(2+). Glu43 lines the K(+) pocket. The L-methionine site is built by Glu56 and Gln99. Residues 99 to 109 (QSPEIAQGVDR) are flexible loop. ATP contacts are provided by residues 164–166 (DAK), 230–231 (RF), Asp239, 245–246 (RK), Ala262, and Lys266. Asp239 contributes to the L-methionine binding site. Residue Lys270 participates in L-methionine binding.

The protein belongs to the AdoMet synthase family. Homotetramer; dimer of dimers. Mg(2+) is required as a cofactor. K(+) serves as cofactor.

The protein resides in the cytoplasm. It carries out the reaction L-methionine + ATP + H2O = S-adenosyl-L-methionine + phosphate + diphosphate. The protein operates within amino-acid biosynthesis; S-adenosyl-L-methionine biosynthesis; S-adenosyl-L-methionine from L-methionine: step 1/1. Functionally, catalyzes the formation of S-adenosylmethionine (AdoMet) from methionine and ATP. The overall synthetic reaction is composed of two sequential steps, AdoMet formation and the subsequent tripolyphosphate hydrolysis which occurs prior to release of AdoMet from the enzyme. The protein is S-adenosylmethionine synthase of Colwellia psychrerythraea (strain 34H / ATCC BAA-681) (Vibrio psychroerythus).